The sequence spans 514 residues: Probable peptidoglycan glycosyltransferase FtsW (514 aa).

A run of 9 helical transmembrane segments spans residues Ile45–Ala65, Ile86–Trp106, Thr108–Gly128, Trp137–Thr157, Val182–Val202, Leu218–Phe238, Ile301–Met321, Val347–Pro367, and Leu373–Leu393. Disordered regions lie at residues Gly411–His437 and Asp449–Lys501.

Belongs to the SEDS family. FtsW subfamily.

The protein resides in the cell inner membrane. It catalyses the reaction [GlcNAc-(1-&gt;4)-Mur2Ac(oyl-L-Ala-gamma-D-Glu-L-Lys-D-Ala-D-Ala)](n)-di-trans,octa-cis-undecaprenyl diphosphate + beta-D-GlcNAc-(1-&gt;4)-Mur2Ac(oyl-L-Ala-gamma-D-Glu-L-Lys-D-Ala-D-Ala)-di-trans,octa-cis-undecaprenyl diphosphate = [GlcNAc-(1-&gt;4)-Mur2Ac(oyl-L-Ala-gamma-D-Glu-L-Lys-D-Ala-D-Ala)](n+1)-di-trans,octa-cis-undecaprenyl diphosphate + di-trans,octa-cis-undecaprenyl diphosphate + H(+). It participates in cell wall biogenesis; peptidoglycan biosynthesis. Peptidoglycan polymerase that is essential for cell division. The protein is Probable peptidoglycan glycosyltransferase FtsW of Alteromonas naphthalenivorans.